The following is a 99-amino-acid chain: DNA-binding protein Fis (99 aa).

A DNA-binding region (H-T-H motif) is located at residues 75–94 (QTRAAIMMGINRGTLRKKLK).

This sequence belongs to the transcriptional regulatory Fis family. As to quaternary structure, homodimer.

Functionally, activates ribosomal RNA transcription. Plays a direct role in upstream activation of rRNA promoters. This Tolumonas auensis (strain DSM 9187 / NBRC 110442 / TA 4) protein is DNA-binding protein Fis.